The sequence spans 295 residues: Bifunctional protein FolD (295 aa).

Residues Gly165–Ser167, Ser190, and Ile231 contribute to the NADP(+) site.

The protein belongs to the tetrahydrofolate dehydrogenase/cyclohydrolase family. Homodimer.

The catalysed reaction is (6R)-5,10-methylene-5,6,7,8-tetrahydrofolate + NADP(+) = (6R)-5,10-methenyltetrahydrofolate + NADPH. The enzyme catalyses (6R)-5,10-methenyltetrahydrofolate + H2O = (6R)-10-formyltetrahydrofolate + H(+). The protein operates within one-carbon metabolism; tetrahydrofolate interconversion. In terms of biological role, catalyzes the oxidation of 5,10-methylenetetrahydrofolate to 5,10-methenyltetrahydrofolate and then the hydrolysis of 5,10-methenyltetrahydrofolate to 10-formyltetrahydrofolate. In Nitrosomonas europaea (strain ATCC 19718 / CIP 103999 / KCTC 2705 / NBRC 14298), this protein is Bifunctional protein FolD.